A 287-amino-acid chain; its full sequence is PAK4-inhibitor INKA1 (287 aa).

2 disordered regions span residues 22 to 59 (GRDT…LEED) and 138 to 157 (SRAP…KSTP). A compositionally biased stretch (polar residues) spans 35 to 50 (QPTSQTGPDVQPSHQL). Residues 138-147 (SRAPVASVPP) are compositionally biased toward low complexity. 2 inka box regions span residues 168–205 (EAED…ELPE) and 261–287 (PADV…VSYL).

This sequence belongs to the INKA family. In terms of assembly, interacts with PAK4.

The protein resides in the nucleus. It is found in the cytoplasm. In terms of biological role, inhibitor of the serine/threonine-protein kinase PAK4. Acts by binding PAK4 in a substrate-like manner, inhibiting the protein kinase activity. The chain is PAK4-inhibitor INKA1 from Homo sapiens (Human).